A 207-amino-acid chain; its full sequence is ATP-dependent Clp protease proteolytic subunit (207 aa).

S111 (nucleophile) is an active-site residue. H136 is an active-site residue.

Belongs to the peptidase S14 family. As to quaternary structure, fourteen ClpP subunits assemble into 2 heptameric rings which stack back to back to give a disk-like structure with a central cavity, resembling the structure of eukaryotic proteasomes.

The protein localises to the cytoplasm. It carries out the reaction Hydrolysis of proteins to small peptides in the presence of ATP and magnesium. alpha-casein is the usual test substrate. In the absence of ATP, only oligopeptides shorter than five residues are hydrolyzed (such as succinyl-Leu-Tyr-|-NHMec, and Leu-Tyr-Leu-|-Tyr-Trp, in which cleavage of the -Tyr-|-Leu- and -Tyr-|-Trp bonds also occurs).. Functionally, cleaves peptides in various proteins in a process that requires ATP hydrolysis. Has a chymotrypsin-like activity. Plays a major role in the degradation of misfolded proteins. The polypeptide is ATP-dependent Clp protease proteolytic subunit (Aeromonas salmonicida (strain A449)).